The following is a 616-amino-acid chain: Dihydroxy-acid dehydratase (616 aa).

D81 is a Mg(2+) binding site. A [2Fe-2S] cluster-binding site is contributed by C122. Positions 123 and 124 each coordinate Mg(2+). At K124 the chain carries N6-carboxylysine. C195 is a binding site for [2Fe-2S] cluster. Residue E491 coordinates Mg(2+). The Proton acceptor role is filled by S517.

This sequence belongs to the IlvD/Edd family. As to quaternary structure, homodimer. [2Fe-2S] cluster serves as cofactor. Requires Mg(2+) as cofactor.

The catalysed reaction is (2R)-2,3-dihydroxy-3-methylbutanoate = 3-methyl-2-oxobutanoate + H2O. It carries out the reaction (2R,3R)-2,3-dihydroxy-3-methylpentanoate = (S)-3-methyl-2-oxopentanoate + H2O. The protein operates within amino-acid biosynthesis; L-isoleucine biosynthesis; L-isoleucine from 2-oxobutanoate: step 3/4. It functions in the pathway amino-acid biosynthesis; L-valine biosynthesis; L-valine from pyruvate: step 3/4. Its function is as follows. Functions in the biosynthesis of branched-chain amino acids. Catalyzes the dehydration of (2R,3R)-2,3-dihydroxy-3-methylpentanoate (2,3-dihydroxy-3-methylvalerate) into 2-oxo-3-methylpentanoate (2-oxo-3-methylvalerate) and of (2R)-2,3-dihydroxy-3-methylbutanoate (2,3-dihydroxyisovalerate) into 2-oxo-3-methylbutanoate (2-oxoisovalerate), the penultimate precursor to L-isoleucine and L-valine, respectively. The sequence is that of Dihydroxy-acid dehydratase from Klebsiella pneumoniae subsp. pneumoniae (strain ATCC 700721 / MGH 78578).